Reading from the N-terminus, the 921-residue chain is Protein translocase subunit SecA (921 aa).

Residues glutamine 86, 104 to 108 (GEGKT), and aspartate 512 contribute to the ATP site. Residues cysteine 905, cysteine 907, cysteine 916, and histidine 917 each contribute to the Zn(2+) site.

Belongs to the SecA family. Monomer and homodimer. Part of the essential Sec protein translocation apparatus which comprises SecA, SecYEG and auxiliary proteins SecDF-YajC and YidC. Zn(2+) is required as a cofactor.

It localises to the cell inner membrane. The protein resides in the cytoplasm. It carries out the reaction ATP + H2O + cellular proteinSide 1 = ADP + phosphate + cellular proteinSide 2.. Its function is as follows. Part of the Sec protein translocase complex. Interacts with the SecYEG preprotein conducting channel. Has a central role in coupling the hydrolysis of ATP to the transfer of proteins into and across the cell membrane, serving both as a receptor for the preprotein-SecB complex and as an ATP-driven molecular motor driving the stepwise translocation of polypeptide chains across the membrane. The sequence is that of Protein translocase subunit SecA from Caulobacter sp. (strain K31).